We begin with the raw amino-acid sequence, 235 residues long: Heme oxygenase (235 aa).

Residue His19 coordinates heme b.

This sequence belongs to the heme oxygenase family.

The protein localises to the plastid. The protein resides in the chloroplast. It catalyses the reaction heme b + 3 reduced [NADPH--hemoprotein reductase] + 3 O2 = biliverdin IXalpha + CO + Fe(2+) + 3 oxidized [NADPH--hemoprotein reductase] + 3 H2O + H(+). Catalyzes the opening of the heme ring with the release of iron. Key enzyme in the synthesis of the chromophoric part of the photosynthetic antennae. This chain is Heme oxygenase (pbsA), found in Rhodella violacea (Red alga).